Reading from the N-terminus, the 637-residue chain is 3D-(3,5/4)-trihydroxycyclohexane-1,2-dione hydrolase (637 aa).

A thiamine diphosphate-binding site is contributed by E66. The interval 442–522 (SLPGDLQRLW…INILLFDNAG (81 aa)) is thiamine pyrophosphate binding. Mg(2+) contacts are provided by D493 and N520.

It belongs to the TPP enzyme family. It depends on Mg(2+) as a cofactor. Requires thiamine diphosphate as cofactor.

The catalysed reaction is 3D-3,5/4-trihydroxycyclohexane-1,2-dione + H2O = 5-deoxy-D-glucuronate + H(+). Its pathway is polyol metabolism; myo-inositol degradation into acetyl-CoA; acetyl-CoA from myo-inositol: step 3/7. In terms of biological role, involved in the cleavage of the C1-C2 bond of 3D-(3,5/4)-trihydroxycyclohexane-1,2-dione (THcHDO) to yield 5-deoxy-glucuronate (5DG). This Shouchella clausii (strain KSM-K16) (Alkalihalobacillus clausii) protein is 3D-(3,5/4)-trihydroxycyclohexane-1,2-dione hydrolase.